We begin with the raw amino-acid sequence, 40 residues long: Photosystem II reaction center protein J (40 aa).

Residues 8–28 (IPLWLIGTVTGIPVIGLVGVF) traverse the membrane as a helical segment.

The protein belongs to the PsbJ family. PSII is composed of 1 copy each of membrane proteins PsbA, PsbB, PsbC, PsbD, PsbE, PsbF, PsbH, PsbI, PsbJ, PsbK, PsbL, PsbM, PsbT, PsbX, PsbY, PsbZ, Psb30/Ycf12, at least 3 peripheral proteins of the oxygen-evolving complex and a large number of cofactors. It forms dimeric complexes.

The protein localises to the plastid. Its subcellular location is the chloroplast thylakoid membrane. In terms of biological role, one of the components of the core complex of photosystem II (PSII). PSII is a light-driven water:plastoquinone oxidoreductase that uses light energy to abstract electrons from H(2)O, generating O(2) and a proton gradient subsequently used for ATP formation. It consists of a core antenna complex that captures photons, and an electron transfer chain that converts photonic excitation into a charge separation. This is Photosystem II reaction center protein J from Lolium perenne (Perennial ryegrass).